Consider the following 283-residue polypeptide: Bifunctional protein FolD (283 aa).

NADP(+) contacts are provided by residues 164–166 (GSS), isoleucine 189, and isoleucine 230.

Belongs to the tetrahydrofolate dehydrogenase/cyclohydrolase family. Homodimer.

It catalyses the reaction (6R)-5,10-methylene-5,6,7,8-tetrahydrofolate + NADP(+) = (6R)-5,10-methenyltetrahydrofolate + NADPH. The enzyme catalyses (6R)-5,10-methenyltetrahydrofolate + H2O = (6R)-10-formyltetrahydrofolate + H(+). It participates in one-carbon metabolism; tetrahydrofolate interconversion. Functionally, catalyzes the oxidation of 5,10-methylenetetrahydrofolate to 5,10-methenyltetrahydrofolate and then the hydrolysis of 5,10-methenyltetrahydrofolate to 10-formyltetrahydrofolate. This chain is Bifunctional protein FolD, found in Fusobacterium nucleatum subsp. nucleatum (strain ATCC 25586 / DSM 15643 / BCRC 10681 / CIP 101130 / JCM 8532 / KCTC 2640 / LMG 13131 / VPI 4355).